Reading from the N-terminus, the 392-residue chain is Phospho-N-acetylmuramoyl-pentapeptide-transferase (392 aa).

Transmembrane regions (helical) follow at residues 28–48 (IIAA…KLIA), 76–96 (TMGG…FADL), 101–121 (VWVM…DDWL), 137–157 (MVLQ…TWTL), 181–201 (WFNP…VVGT), 213–233 (GLAI…CYVA), 268–288 (GAEL…FLWF), 295–315 (VFMG…LAML), 320–340 (VVSA…MIQV), and 369–389 (KIIV…LLSL).

This sequence belongs to the glycosyltransferase 4 family. MraY subfamily. Requires Mg(2+) as cofactor.

The protein localises to the cell inner membrane. It catalyses the reaction UDP-N-acetyl-alpha-D-muramoyl-L-alanyl-gamma-D-glutamyl-meso-2,6-diaminopimeloyl-D-alanyl-D-alanine + di-trans,octa-cis-undecaprenyl phosphate = di-trans,octa-cis-undecaprenyl diphospho-N-acetyl-alpha-D-muramoyl-L-alanyl-D-glutamyl-meso-2,6-diaminopimeloyl-D-alanyl-D-alanine + UMP. The protein operates within cell wall biogenesis; peptidoglycan biosynthesis. Catalyzes the initial step of the lipid cycle reactions in the biosynthesis of the cell wall peptidoglycan: transfers peptidoglycan precursor phospho-MurNAc-pentapeptide from UDP-MurNAc-pentapeptide onto the lipid carrier undecaprenyl phosphate, yielding undecaprenyl-pyrophosphoryl-MurNAc-pentapeptide, known as lipid I. This is Phospho-N-acetylmuramoyl-pentapeptide-transferase from Myxococcus xanthus (strain DK1622).